A 115-amino-acid chain; its full sequence is Thioredoxin-1 (115 aa).

The Thioredoxin domain occupies 2–114; that stretch reads LKRCNFKNQV…RQKVLEHVSA (113 aa). Residues C39 and C42 each act as nucleophile in the active site. An intrachain disulfide couples C39 to C42.

It belongs to the thioredoxin family. Expressed in ASJ and ASI ciliated sensory neurons. Expressed in the intestine (at protein level).

Functionally, participates in various redox reactions through the reversible oxidation of its active center dithiol to a disulfide and catalyzes dithiol-disulfide exchange reactions. Shown to facilitate the reduction of insulin disulfide bonds. Might play a role in the reversible nitrosylation of cysteine residues in target proteins, and thereby contributing to the response to intracellular nitric oxide. Shapes the ASJ sensory neuron biphasic response to nitric oxide (NO) exposure; trans-nitrosylation activity might inhibit calcium flux to the cytoplasm in ASJ neurons when exposed to a NO stimulus, whereas de-nitrosylation activity might promote calcium flux when NO is diminished. By regulating the NO-induced ASJ sensory neuron activity, mediates the avoidance response to NO-producing organisms like P.aeruginosa. Positively regulates life span extension under normal and caloric restriction conditions, dauer formation and the oxidative stress response. Contributes to the down-regulation of expression of the insulin-like neuropeptide daf-28 in the ASJ neurons in a redox-independent fashion, thereby promoting dauer formation. Negatively regulates the nuclear localization of the intestinal skn-1 transcription factor in a p38 MAPK pathway-dependent and redox-independent fashion. The protein is Thioredoxin-1 (trx-1) of Caenorhabditis elegans.